Consider the following 351-residue polypeptide: Alternative oxidase, mitochondrial (351 aa).

A helical membrane pass occupies residues Leu147–Leu167. Residues Glu154, Glu193, and His196 each contribute to the Fe cation site. A helical transmembrane segment spans residues Leu212 to Ser232. Positions 244, 245, 299, and 302 each coordinate Fe cation. The interval Ala322–Ile351 is disordered.

It belongs to the alternative oxidase family. Fe cation serves as cofactor.

It is found in the mitochondrion inner membrane. In terms of biological role, catalyzes cyanide-resistant oxygen consumption. May increase respiration when the cytochrome respiratory pathway is restricted, or in response to low temperatures. In Aspergillus niger, this protein is Alternative oxidase, mitochondrial (aox1).